A 386-amino-acid polypeptide reads, in one-letter code: 8-amino-7-oxononanoate synthase (386 aa).

Residues arginine 22 and arginine 29 each contribute to the substrate site. Position 109 to 110 (109 to 110 (GY)) interacts with pyridoxal 5'-phosphate. Histidine 134 provides a ligand contact to substrate. Pyridoxal 5'-phosphate-binding positions include serine 182, 207–210 (DDAH), and 237–240 (TLSK). Lysine 240 carries the post-translational modification N6-(pyridoxal phosphate)lysine. Residue threonine 349 coordinates substrate.

The protein belongs to the class-II pyridoxal-phosphate-dependent aminotransferase family. BioF subfamily. As to quaternary structure, homodimer. Pyridoxal 5'-phosphate serves as cofactor.

It catalyses the reaction 6-carboxyhexanoyl-[ACP] + L-alanine + H(+) = (8S)-8-amino-7-oxononanoate + holo-[ACP] + CO2. Its pathway is cofactor biosynthesis; biotin biosynthesis. In terms of biological role, catalyzes the decarboxylative condensation of pimeloyl-[acyl-carrier protein] and L-alanine to produce 8-amino-7-oxononanoate (AON), [acyl-carrier protein], and carbon dioxide. The sequence is that of 8-amino-7-oxononanoate synthase from Beijerinckia indica subsp. indica (strain ATCC 9039 / DSM 1715 / NCIMB 8712).